Here is a 238-residue protein sequence, read N- to C-terminus: Ribonuclease PH (238 aa).

Phosphate-binding positions include Arg86 and 124–126 (GTR).

It belongs to the RNase PH family. In terms of assembly, homohexameric ring arranged as a trimer of dimers.

It carries out the reaction tRNA(n+1) + phosphate = tRNA(n) + a ribonucleoside 5'-diphosphate. Functionally, phosphorolytic 3'-5' exoribonuclease that plays an important role in tRNA 3'-end maturation. Removes nucleotide residues following the 3'-CCA terminus of tRNAs; can also add nucleotides to the ends of RNA molecules by using nucleoside diphosphates as substrates, but this may not be physiologically important. Probably plays a role in initiation of 16S rRNA degradation (leading to ribosome degradation) during starvation. In Pectobacterium atrosepticum (strain SCRI 1043 / ATCC BAA-672) (Erwinia carotovora subsp. atroseptica), this protein is Ribonuclease PH.